We begin with the raw amino-acid sequence, 1209 residues long: Protein phosphatase 1 regulatory subunit 26 (1209 aa).

Disordered stretches follow at residues 57 to 91, 145 to 279, 291 to 471, 501 to 532, 555 to 694, 733 to 836, 848 to 1033, 1052 to 1072, and 1118 to 1209; these read DGAARGTSDERAAQRGHRAEGCHDARPAAKPTVHK, SGAA…HRQG, KPPR…VERS, GSDGSLSASPLFYSPNVPSRSDGDSSSVDSDD, GESC…EDLD, EQLG…SNDS, KAKE…FAHQ, RGGVGSERDKGSEGPARGLPS, and AFRE…VVKV. The segment covering 63–91 has biased composition (basic and acidic residues); it reads TSDERAAQRGHRAEGCHDARPAAKPTVHK. Positions 201-219 are enriched in low complexity; sequence QVGSSKDQGSASPVSVSSD. Over residues 226–255 the composition is skewed to basic and acidic residues; the sequence is IRAEIEQFLNEKRQHETQKCDGSVEKKPDT. Polar residues predominate over residues 301–321; that stretch reads QPRSLRSKVTTTQENEGSTKP. Low complexity predominate over residues 352 to 362; it reads SAAQASEASDS. Basic and acidic residues predominate over residues 442 to 454; the sequence is DTDHAPKLLKETK. Composition is skewed to basic and acidic residues over residues 609–637, 667–685, and 757–766; these read KMQEVVKDGSQDADHSQGRAEPGHERRDL, KTDEARRLDEKESSEDKSS, and SKRDSGEGPG. Low complexity-rich tracts occupy residues 821–836 and 852–861; these read PGSLSDDSSSVDSNDS and SVSSSEVQAE. A Phosphoserine modification is found at S1161. Residues 1187–1209 are compositionally biased toward low complexity; that stretch reads GSDASDFSDTSTEDSGGSSVVKV.

As to quaternary structure, interacts with UTP20 and PPP1CA. In terms of tissue distribution, ubiquitous in normal tissues. Expressed in numerous adenocarcinoma cell lines.

It localises to the nucleus. It is found in the nucleolus. Functionally, inhibits phosphatase activity of protein phosphatase 1 (PP1) complexes. May positively regulate cell proliferation. This chain is Protein phosphatase 1 regulatory subunit 26 (PPP1R26), found in Homo sapiens (Human).